The primary structure comprises 115 residues: Nitrogenase-stabilizing/protective protein NifW (115 aa).

This sequence belongs to the NifW family. In terms of assembly, homotrimer; associates with NifD.

May protect the nitrogenase Fe-Mo protein from oxidative damage. The sequence is that of Nitrogenase-stabilizing/protective protein NifW from Azotobacter vinelandii (strain DJ / ATCC BAA-1303).